The following is a 325-amino-acid chain: MFRKIHSIFNSSPQRKTAAESPFYEGASPAVKLIRSSSMYVVGDHGEKFSESLKKYKSTSSMDTSLYYLRQEEDRAWMYSRTQDCLQYLQELLALRKKYLSSFSDLKPHRTQGISSTSSKSSKGGKKTPVRSTPKEIKKATPKKYSQFSADVAEAIAFFDSIIAELDTERRPRAAEASLPNEDVDFDVATSSREHSLHSNWILRAPRRHSEDIAAHTVHTVDGQFRRSTEHRTVGTQRRLERHPIYLPKAVEGAFNTWKFKPKACKKDLGSSRQILFNFSGEDMEWDAELFALEPQLSPGEDYYETENPKGQWLLRERLWERTVP.

The segment at 108-141 is disordered; it reads PHRTQGISSTSSKSSKGGKKTPVRSTPKEIKKAT.

This is an uncharacterized protein from Homo sapiens (Human).